The following is a 366-amino-acid chain: Chorismate synthase (366 aa).

NADP(+)-binding residues include Arg-48 and Arg-54. FMN contacts are provided by residues 125-127 (RSS), 238-239 (NA), Gly-278, 293-297 (KPTSS), and Arg-319.

It belongs to the chorismate synthase family. In terms of assembly, homotetramer. FMNH2 is required as a cofactor.

The enzyme catalyses 5-O-(1-carboxyvinyl)-3-phosphoshikimate = chorismate + phosphate. The protein operates within metabolic intermediate biosynthesis; chorismate biosynthesis; chorismate from D-erythrose 4-phosphate and phosphoenolpyruvate: step 7/7. Functionally, catalyzes the anti-1,4-elimination of the C-3 phosphate and the C-6 proR hydrogen from 5-enolpyruvylshikimate-3-phosphate (EPSP) to yield chorismate, which is the branch point compound that serves as the starting substrate for the three terminal pathways of aromatic amino acid biosynthesis. This reaction introduces a second double bond into the aromatic ring system. This is Chorismate synthase from Neisseria meningitidis serogroup A / serotype 4A (strain DSM 15465 / Z2491).